Reading from the N-terminus, the 530-residue chain is uncharacterized protein (530 aa).

2 stretches are compositionally biased toward basic and acidic residues: residues 1–11 (MTALNDTERAV) and 28–38 (PRSEETASERP). Positions 1 to 38 (MTALNDTERAVRNWTAGRPHRPAPMRPPRSEETASERP) are disordered. The Cytoplasmic segment spans residues 1-50 (MTALNDTERAVRNWTAGRPHRPAPMRPPRSEETASERPSRYYPTWLPSRS). The chain crosses the membrane as a helical span at residues 51–71 (FIAAVIAIGGMQLLATMDSTV). Topologically, residues 72-91 (AIVALPKIQNELSLSDAGRS) are extracellular. The helical transmembrane segment at 92 to 112 (WVITAYVLTFGGLMLLGGRLG) threads the bilayer. The Cytoplasmic portion of the chain corresponds to 113 to 119 (DTIGRKR). Residues 120–140 (TFIVGVALFTISSVLCAVAWD) form a helical membrane-spanning segment. The Extracellular portion of the chain corresponds to 141 to 150 (EATLVIARLS). Residues 151–171 (QGVGSAIASPTGLALVATTFP) form a helical membrane-spanning segment. Over 172–180 (KGPARNAAT) the chain is Cytoplasmic. A helical transmembrane segment spans residues 181–201 (AVFAAMTAIGSVMGLVVGGAL). The Extracellular segment spans residues 202–203 (TE). A helical transmembrane segment spans residues 204-224 (VSWRWAFLVNVPIGLVMIYLA). The Cytoplasmic portion of the chain corresponds to 225-239 (RTALRETNKERMKLD). A helical membrane pass occupies residues 240–260 (ATGAILATLACTAAVFAFSIG). Residues 261 to 266 (PEKGWM) lie on the Extracellular side of the membrane. Residues 267-287 (SGITIGSGLVALAAAVAFVIV) form a helical membrane-spanning segment. Residues 288–306 (ERTAENPVVPFHLFRDRNR) are Cytoplasmic-facing. A helical membrane pass occupies residues 307-327 (LVTFSAILLAGGVMFSLTVCI). The Extracellular portion of the chain corresponds to 328 to 343 (GLYVQDILGYSALRAG). A helical membrane pass occupies residues 344-364 (VGFIPFVIAMGIGLGVSSQLV). At 365–370 (SRFSPR) the chain is on the cytoplasmic side. A helical membrane pass occupies residues 371–391 (VLTIGGGYLLFGAMLYGSFFM). Residues 392 to 400 (HRGVPYFPN) are Extracellular-facing. The helical transmembrane segment at 401–421 (LVMPIVVGGIGIGMAVVPLTL) threads the bilayer. Topologically, residues 422-437 (SAIAGVGFDQIGPVSA) are cytoplasmic. A helical transmembrane segment spans residues 438 to 458 (IALMLQSLGGPLVLAVIQAVI). The Extracellular portion of the chain corresponds to 459–488 (TSRTLYLGGTTGPVKFMNDVQLAALDHAYT). The helical transmembrane segment at 489–509 (YGLLWVAGAAIIVGGMALFIG) threads the bilayer. Residues 510–530 (YTPQQVAHAQEVKEAIDAGEL) are Cytoplasmic-facing.

Belongs to the major facilitator superfamily.

It is found in the cell membrane. This is an uncharacterized protein from Mycobacterium tuberculosis (strain CDC 1551 / Oshkosh).